A 449-amino-acid chain; its full sequence is Serine--tRNA ligase (449 aa).

255–257 (TSE) contributes to the L-serine binding site. 286 to 288 (RSE) provides a ligand contact to ATP. Residue Glu309 participates in L-serine binding. Residue 373–376 (EISS) participates in ATP binding. Ser409 contacts L-serine.

The protein belongs to the class-II aminoacyl-tRNA synthetase family. Type-1 seryl-tRNA synthetase subfamily. As to quaternary structure, homodimer. The tRNA molecule binds across the dimer.

Its subcellular location is the cytoplasm. It carries out the reaction tRNA(Ser) + L-serine + ATP = L-seryl-tRNA(Ser) + AMP + diphosphate + H(+). The catalysed reaction is tRNA(Sec) + L-serine + ATP = L-seryl-tRNA(Sec) + AMP + diphosphate + H(+). It functions in the pathway aminoacyl-tRNA biosynthesis; selenocysteinyl-tRNA(Sec) biosynthesis; L-seryl-tRNA(Sec) from L-serine and tRNA(Sec): step 1/1. In terms of biological role, catalyzes the attachment of serine to tRNA(Ser). Is also able to aminoacylate tRNA(Sec) with serine, to form the misacylated tRNA L-seryl-tRNA(Sec), which will be further converted into selenocysteinyl-tRNA(Sec). The protein is Serine--tRNA ligase of Bordetella avium (strain 197N).